A 119-amino-acid chain; its full sequence is DNA-binding protein inhibitor ID-3 (119 aa).

The 53-residue stretch at 28–80 (RGKSPAAEEPLSLLDDMNHCYSRLRELVPGVPRGTQLSQVEILQRVIDYILDL) folds into the bHLH domain.

Homodimer, and heterodimer with other HLH proteins. Interacts with COPS5 and COPS7A. Interacts with IFI204. Interacts with GATA4 and NKX2-5. Interacts with ANKRD2; both proteins cooperate in myoblast differentiation. Interacts with CLOCK and BMAL1.

The protein resides in the nucleus. Transcriptional regulator (lacking a basic DNA binding domain) which negatively regulates the basic helix-loop-helix (bHLH) transcription factors by forming heterodimers and inhibiting their DNA binding and transcriptional activity. Implicated in regulating a variety of cellular processes, including cellular growth, senescence, differentiation, apoptosis, angiogenesis, and neoplastic transformation. Involved in myogenesis by inhibiting skeletal muscle and cardiac myocyte differentiation and promoting muscle precursor cells proliferation. Inhibits the binding of E2A-containing protein complexes to muscle creatine kinase E-box enhancer. Regulates the circadian clock by repressing the transcriptional activator activity of the CLOCK-BMAL1 heterodimer. The polypeptide is DNA-binding protein inhibitor ID-3 (ID3) (Bos taurus (Bovine)).